Here is a 242-residue protein sequence, read N- to C-terminus: Venom nerve growth factor 1 (242 aa).

The signal sequence occupies residues 1-18 (MSMLCYTLIIAFLIGIWA). A propeptide spanning residues 19–125 (APQSEDNVPL…ALNRNIQAKR (107 aa)) is cleaved from the precursor. 3 disulfide bridges follow: Cys139–Cys203, Cys181–Cys231, and Cys191–Cys233.

The protein belongs to the NGF-beta family. As to quaternary structure, homodimer; non-covalently linked. As to expression, expressed by the venom gland.

It is found in the secreted. Nerve growth factor is important for the development and maintenance of the sympathetic and sensory nervous systems. It stimulates division and differentiation of sympathetic and embryonic sensory neurons as well as basal forebrain cholinergic neurons in the brain. Its relevance in the snake venom is not clear. However, it has been shown to inhibit metalloproteinase-dependent proteolysis of platelet glycoprotein Ib alpha, suggesting a metalloproteinase inhibition to prevent metalloprotease autodigestion and/or protection against prey proteases. Binds a lipid between the two protein chains in the homodimer. The lipid-bound form promotes histamine relase from mouse mast cells, contrary to the lipid-free form. The sequence is that of Venom nerve growth factor 1 from Pseudechis australis (Mulga snake).